Consider the following 354-residue polypeptide: MKKIIMTGGGTAGHVTPNLALVPELKKLGYEIKYIGSIEGIERKIIEKEGIEYFPISSGKLRRYFDLKNFSDPFKVLKGVFQAKKIIKKEKPDIVFSKGGFVTVPVVIAAHLNKIPVIAHESDITPGLANKLATPYCTRVCVTFPESVKHIKGDKAVLTGTPIRRELLEGNKLEGIKLCGFKDNKPILLIIGGSLGSKIINGIVRKNLDNILSKFNIIHICGKSNLDENLENRKGYAQFEYVNEELPDLMKASDLVISRAGANVIYELLALKKPNLLIPLSKKSSRGDQILNAASFEKSGYSLVLKEEELEDKTLMKKLNHLYENRNVYINNMSKSKMDNGVKNITELIKKYTK.

UDP-N-acetyl-alpha-D-glucosamine contacts are provided by residues 11 to 13 (TAG), arginine 164, serine 194, and glutamine 289.

This sequence belongs to the glycosyltransferase 28 family. MurG subfamily.

The protein localises to the cell membrane. The catalysed reaction is di-trans,octa-cis-undecaprenyl diphospho-N-acetyl-alpha-D-muramoyl-L-alanyl-D-glutamyl-meso-2,6-diaminopimeloyl-D-alanyl-D-alanine + UDP-N-acetyl-alpha-D-glucosamine = di-trans,octa-cis-undecaprenyl diphospho-[N-acetyl-alpha-D-glucosaminyl-(1-&gt;4)]-N-acetyl-alpha-D-muramoyl-L-alanyl-D-glutamyl-meso-2,6-diaminopimeloyl-D-alanyl-D-alanine + UDP + H(+). Its pathway is cell wall biogenesis; peptidoglycan biosynthesis. Cell wall formation. Catalyzes the transfer of a GlcNAc subunit on undecaprenyl-pyrophosphoryl-MurNAc-pentapeptide (lipid intermediate I) to form undecaprenyl-pyrophosphoryl-MurNAc-(pentapeptide)GlcNAc (lipid intermediate II). This Clostridium botulinum (strain 657 / Type Ba4) protein is UDP-N-acetylglucosamine--N-acetylmuramyl-(pentapeptide) pyrophosphoryl-undecaprenol N-acetylglucosamine transferase.